Here is a 119-residue protein sequence, read N- to C-terminus: Large ribosomal subunit protein uL18 (119 aa).

The protein belongs to the universal ribosomal protein uL18 family. In terms of assembly, part of the 50S ribosomal subunit; part of the 5S rRNA/L5/L18/L25 subcomplex. Contacts the 5S and 23S rRNAs.

In terms of biological role, this is one of the proteins that bind and probably mediate the attachment of the 5S RNA into the large ribosomal subunit, where it forms part of the central protuberance. The polypeptide is Large ribosomal subunit protein uL18 (Clostridium botulinum (strain Langeland / NCTC 10281 / Type F)).